A 278-amino-acid chain; its full sequence is Elongation factor Ts (278 aa).

Residues 81–84 form an involved in Mg(2+) ion dislocation from EF-Tu region; it reads TDFV.

This sequence belongs to the EF-Ts family.

The protein localises to the cytoplasm. In terms of biological role, associates with the EF-Tu.GDP complex and induces the exchange of GDP to GTP. It remains bound to the aminoacyl-tRNA.EF-Tu.GTP complex up to the GTP hydrolysis stage on the ribosome. This is Elongation factor Ts from Thermobifida fusca (strain YX).